A 398-amino-acid polypeptide reads, in one-letter code: NADH-quinone oxidoreductase subunit D (398 aa).

This sequence belongs to the complex I 49 kDa subunit family. As to quaternary structure, NDH-1 is composed of 14 different subunits. Subunits NuoB, C, D, E, F, and G constitute the peripheral sector of the complex.

It is found in the cell inner membrane. It carries out the reaction a quinone + NADH + 5 H(+)(in) = a quinol + NAD(+) + 4 H(+)(out). In terms of biological role, NDH-1 shuttles electrons from NADH, via FMN and iron-sulfur (Fe-S) centers, to quinones in the respiratory chain. The immediate electron acceptor for the enzyme in this species is believed to be ubiquinone. Couples the redox reaction to proton translocation (for every two electrons transferred, four hydrogen ions are translocated across the cytoplasmic membrane), and thus conserves the redox energy in a proton gradient. The polypeptide is NADH-quinone oxidoreductase subunit D (Rhodospirillum centenum (strain ATCC 51521 / SW)).